A 223-amino-acid polypeptide reads, in one-letter code: UPF0441 protein KPK_0672 (223 aa).

The interval 165–223 is disordered; sequence SYGAAQPGRTMNVPKTAMAPKPATTTTVTRGGFGESVAKQSTMQRSAAGSTSSSRSMGG. Composition is skewed to low complexity over residues 177–193 and 209–223; these read VPKTAMAPKPATTTTVT and RSAAGSTSSSRSMGG.

It belongs to the UPF0441 family.

In Klebsiella pneumoniae (strain 342), this protein is UPF0441 protein KPK_0672.